Consider the following 228-residue polypeptide: 7-cyano-7-deazaguanine synthase (228 aa).

9 to 19 provides a ligand contact to ATP; that stretch reads LSGGPDSTTVL. Zn(2+) is bound by residues C193, C203, C206, and C209.

Belongs to the QueC family. It depends on Zn(2+) as a cofactor.

It catalyses the reaction 7-carboxy-7-deazaguanine + NH4(+) + ATP = 7-cyano-7-deazaguanine + ADP + phosphate + H2O + H(+). It functions in the pathway purine metabolism; 7-cyano-7-deazaguanine biosynthesis. Its function is as follows. Catalyzes the ATP-dependent conversion of 7-carboxy-7-deazaguanine (CDG) to 7-cyano-7-deazaguanine (preQ(0)). The polypeptide is 7-cyano-7-deazaguanine synthase (Rickettsia africae (strain ESF-5)).